A 302-amino-acid polypeptide reads, in one-letter code: AP-1 complex-associated regulatory protein (302 aa).

Residue S29 is modified to Phosphoserine. The tract at residues 78-138 (DSIAEKQKDL…ERQRIVQQYH (61 aa)) is interaction with AP1G1. Residues 80 to 138 (IAEKQKDLDKKIQKELALQEEKLRLEEEALYAAQREAARAAKQRKLLEQERQRIVQQYH) are a coiled coil. The span at 188–206 (CDLMTKTKSTSGNDDSTSL) shows a compositional bias: polar residues. The segment at 188–258 (CDLMTKTKST…TSASDDSNGL (71 aa)) is disordered. The sufficient for association with the Arp2/3 complex stretch occupies residues 199–215 (GNDDSTSLDLEWEDEEG). Over residues 221 to 233 (PMRERSKTEEDIL) the composition is skewed to basic and acidic residues. S226 is subject to Phosphoserine. Residue T228 is modified to Phosphothreonine. Residues 242 to 255 (KKTGSNPTSASDDS) show a composition bias toward polar residues.

Interacts (via coiled-coil domain) with AP1G1 (via GAE domain). Interacts with KIF5B. Associates with the Arp2/3 complex. Palmitoylated.

The protein resides in the golgi apparatus. The protein localises to the trans-Golgi network. Its subcellular location is the late endosome. It localises to the early endosome. In terms of biological role, necessary for adaptor protein complex 1 (AP-1)-dependent transport between the trans-Golgi network and endosomes. Regulates the membrane association of AP1G1/gamma1-adaptin, one of the subunits of the AP-1 adaptor complex. The direct interaction with AP1G1/gamma1-adaptin attenuates the release of the AP-1 complex from membranes. Regulates endosomal membrane traffic via association with AP-1 and KIF5B thus linking kinesin-based plus-end-directed microtubular transport to AP-1-dependent membrane traffic. May act as effector of AP-1 in calcium-induced endo-lysosome secretion. Inhibits Arp2/3 complex function; negatively regulates cell spreading, size and motility via intracellular sequestration of the Arp2/3 complex. This Homo sapiens (Human) protein is AP-1 complex-associated regulatory protein (AP1AR).